We begin with the raw amino-acid sequence, 196 residues long: N-(5'-phosphoribosyl)anthranilate isomerase (196 aa).

The protein belongs to the TrpF family.

It carries out the reaction N-(5-phospho-beta-D-ribosyl)anthranilate = 1-(2-carboxyphenylamino)-1-deoxy-D-ribulose 5-phosphate. It participates in amino-acid biosynthesis; L-tryptophan biosynthesis; L-tryptophan from chorismate: step 3/5. This chain is N-(5'-phosphoribosyl)anthranilate isomerase, found in Nitratiruptor sp. (strain SB155-2).